The chain runs to 343 residues: N-acetyl-gamma-glutamyl-phosphate reductase (343 aa).

Residue cysteine 148 is part of the active site.

This sequence belongs to the NAGSA dehydrogenase family. Type 1 subfamily.

The protein localises to the cytoplasm. It carries out the reaction N-acetyl-L-glutamate 5-semialdehyde + phosphate + NADP(+) = N-acetyl-L-glutamyl 5-phosphate + NADPH + H(+). Its pathway is amino-acid biosynthesis; L-arginine biosynthesis; N(2)-acetyl-L-ornithine from L-glutamate: step 3/4. Its function is as follows. Catalyzes the NADPH-dependent reduction of N-acetyl-5-glutamyl phosphate to yield N-acetyl-L-glutamate 5-semialdehyde. The protein is N-acetyl-gamma-glutamyl-phosphate reductase of Caldicellulosiruptor bescii (strain ATCC BAA-1888 / DSM 6725 / KCTC 15123 / Z-1320) (Anaerocellum thermophilum).